The primary structure comprises 816 residues: Neuroligin-4, Y-linked (816 aa).

The N-terminal stretch at 1–43 (MLRPQGLLWLPLLFTSVCVMLNSNVLLWITALAIKFTLIDSQA) is a signal peptide. The Extracellular portion of the chain corresponds to 44–676 (QYPVVNTNYG…TKRDYSTELS (633 aa)). N-linked (GlcNAc...) asparagine glycosylation occurs at N102. Cystine bridges form between C110–C146 and C306–C317. Residues 359 to 364 (QGEFLN) form an interaction with NRXN1 region. An intrachain disulfide couples C476 to C510. N511 carries an N-linked (GlcNAc...) asparagine glycan. Positions 636–659 (TKRPAITPANNPKHSKDPHKTGPE) are disordered. The span at 649-658 (HSKDPHKTGP) shows a compositional bias: basic and acidic residues. Residues 677-697 (VTIAVGASLLFLNILAFAALY) form a helical membrane-spanning segment. Over 698-816 (YKKDKRRHET…LPHGHSTTRV (119 aa)) the chain is Cytoplasmic. Position 712 is a phosphoserine (S712).

The protein belongs to the type-B carboxylesterase/lipase family. Homodimer. Interacts with NRXN1 in a calcium-dependent manner. Interaction with neurexins is mediated by heparan sulfate glycan modification on neurexin. Interacts through its C-terminus with DLG4/PSD-95 third PDZ domain. As to expression, expressed in fetal and adult brain, prostate and testis.

Its subcellular location is the cell membrane. It is found in the postsynaptic density membrane. Its function is as follows. Cell surface protein involved in cell-cell-interactions via its interactions with neurexin family members. In Homo sapiens (Human), this protein is Neuroligin-4, Y-linked (NLGN4Y).